A 262-amino-acid chain; its full sequence is Chondroitin proteoglycan 3 (262 aa).

Positions 1 to 17 (MRSSFIFALLLIGAALA) are cleaved as a signal peptide. Residues 37-68 (FSGEASGEASGEASGEFSGEGSGEGSGELSPE) form a disordered region. The span at 39–53 (GEASGEASGEASGEF) shows a compositional bias: low complexity. Residues N140, N148, and N224 are each glycosylated (N-linked (GlcNAc...) asparagine).

This is Chondroitin proteoglycan 3 (cpg-3) from Caenorhabditis briggsae.